The primary structure comprises 333 residues: MPIRHCIVHLIEKKPDGTPAVLHARDSELAESQAIENMLADLNESYNAKQGKAWGLFHPESGAHPFSGWLKEYLDGGKDFTAFSRVSVEHLQKLMEESNLSVGGHVLFAHYQQGMTDYLAIALLHHSDGVAVNAELDVTPSRHLDLGQLHLAARINISEWQNNKQSKQYISFIKGKNGKKVSEYFRDFIGCQEGVDGPGETRTLLKAFSDFVESEDLPEESAREKTKTLIDYASSQSKMGEPMGLEALSELIDENQPRAFYDHIRNKDYGLSPEIPADKRTLNQFRRFTGRAEGLSISFEAHLLGDKIEYDETAGTLIIKGLPTQLTDQLKRR.

This sequence belongs to the YejK family.

The protein localises to the cytoplasm. The protein resides in the nucleoid. The protein is Nucleoid-associated protein PSPTO_1265 of Pseudomonas syringae pv. tomato (strain ATCC BAA-871 / DC3000).